Reading from the N-terminus, the 646-residue chain is Threonine--tRNA ligase (646 aa).

The TGS domain occupies 1–63 (MAQISLTFPD…EADAKIAIHT (63 aa)). The segment at 247 to 544 (DHRKLGKEME…LIENYAGKLP (298 aa)) is catalytic. Zn(2+) is bound by residues Cys344, His395, and His521.

It belongs to the class-II aminoacyl-tRNA synthetase family. As to quaternary structure, homodimer. It depends on Zn(2+) as a cofactor.

The protein localises to the cytoplasm. It catalyses the reaction tRNA(Thr) + L-threonine + ATP = L-threonyl-tRNA(Thr) + AMP + diphosphate + H(+). Its function is as follows. Catalyzes the attachment of threonine to tRNA(Thr) in a two-step reaction: L-threonine is first activated by ATP to form Thr-AMP and then transferred to the acceptor end of tRNA(Thr). Also edits incorrectly charged L-seryl-tRNA(Thr). The sequence is that of Threonine--tRNA ligase from Cereibacter sphaeroides (strain ATCC 17025 / ATH 2.4.3) (Rhodobacter sphaeroides).